Reading from the N-terminus, the 121-residue chain is Large ribosomal subunit protein uL18 (121 aa).

It belongs to the universal ribosomal protein uL18 family. Part of the 50S ribosomal subunit; part of the 5S rRNA/L5/L18/L25 subcomplex. Contacts the 5S and 23S rRNAs.

Its function is as follows. This is one of the proteins that bind and probably mediate the attachment of the 5S RNA into the large ribosomal subunit, where it forms part of the central protuberance. This Streptococcus suis (strain 98HAH33) protein is Large ribosomal subunit protein uL18.